The sequence spans 314 residues: Aspartate carbamoyltransferase catalytic subunit (314 aa).

Residues arginine 55 and threonine 56 each contribute to the carbamoyl phosphate site. Residue lysine 83 coordinates L-aspartate. The carbamoyl phosphate site is built by arginine 105, histidine 134, and glutamine 137. L-aspartate contacts are provided by arginine 167 and arginine 221. Carbamoyl phosphate-binding residues include glycine 262 and proline 263.

This sequence belongs to the aspartate/ornithine carbamoyltransferase superfamily. ATCase family. As to quaternary structure, heterododecamer (2C3:3R2) of six catalytic PyrB chains organized as two trimers (C3), and six regulatory PyrI chains organized as three dimers (R2).

It carries out the reaction carbamoyl phosphate + L-aspartate = N-carbamoyl-L-aspartate + phosphate + H(+). It functions in the pathway pyrimidine metabolism; UMP biosynthesis via de novo pathway; (S)-dihydroorotate from bicarbonate: step 2/3. In terms of biological role, catalyzes the condensation of carbamoyl phosphate and aspartate to form carbamoyl aspartate and inorganic phosphate, the committed step in the de novo pyrimidine nucleotide biosynthesis pathway. This chain is Aspartate carbamoyltransferase catalytic subunit, found in Corynebacterium urealyticum (strain ATCC 43042 / DSM 7109).